The chain runs to 190 residues: Endoribonuclease YbeY (190 aa).

The segment at 1 to 20 (MDVENDRPPRRGAAGERNSG) is disordered. Positions 147, 151, and 157 each coordinate Zn(2+).

Belongs to the endoribonuclease YbeY family. Requires Zn(2+) as cofactor.

The protein resides in the cytoplasm. Its function is as follows. Single strand-specific metallo-endoribonuclease involved in late-stage 70S ribosome quality control and in maturation of the 3' terminus of the 16S rRNA. This is Endoribonuclease YbeY from Nitrobacter hamburgensis (strain DSM 10229 / NCIMB 13809 / X14).